The sequence spans 204 residues: Ribonuclease HII (204 aa).

One can recognise an RNase H type-2 domain in the interval 14–204; it reads QYICGVDEVG…SFKLSCLGEK (191 aa). A divalent metal cation-binding residues include Asp-20, Glu-21, and Asp-116.

This sequence belongs to the RNase HII family. Mn(2+) is required as a cofactor. The cofactor is Mg(2+).

It localises to the cytoplasm. The enzyme catalyses Endonucleolytic cleavage to 5'-phosphomonoester.. In terms of biological role, endonuclease that specifically degrades the RNA of RNA-DNA hybrids. The protein is Ribonuclease HII of Chloroherpeton thalassium (strain ATCC 35110 / GB-78).